Consider the following 84-residue polypeptide: UPF0386 protein NGR_c10980 (84 aa).

The protein belongs to the UPF0386 family.

The protein is UPF0386 protein NGR_c10980 of Sinorhizobium fredii (strain NBRC 101917 / NGR234).